The sequence spans 141 residues: Hemoglobin subunit alpha-A (141 aa).

Residues 1 to 141 (VLSAADKTNV…VGTVLTAKYR (141 aa)) form the Globin domain. Position 58 (His-58) interacts with O2. His-87 contacts heme b.

It belongs to the globin family. Heterotetramer of two alpha chains and two beta chains. Red blood cells.

Functionally, involved in oxygen transport from the lung to the various peripheral tissues. This chain is Hemoglobin subunit alpha-A (HBAA), found in Branta canadensis (Canada goose).